Consider the following 160-residue polypeptide: Outer membrane protein MT2024.1 (160 aa).

A signal peptide spans 1–22 (MSWSRVIAYGLLPGLALALTCG).

The protein resides in the cell outer membrane. In Mycobacterium tuberculosis (strain CDC 1551 / Oshkosh), this protein is Outer membrane protein MT2024.1.